We begin with the raw amino-acid sequence, 132 residues long: Protein NrdI (132 aa).

The protein belongs to the NrdI family.

Its function is as follows. Probably involved in ribonucleotide reductase function. The chain is Protein NrdI from Staphylococcus epidermidis (strain ATCC 35984 / DSM 28319 / BCRC 17069 / CCUG 31568 / BM 3577 / RP62A).